A 276-amino-acid polypeptide reads, in one-letter code: UPF0761 membrane protein APL_1950 (276 aa).

The next 7 helical transmembrane spans lie at 33-53 (TLAI…FPIF), 90-110 (MGIV…QSID), 125-145 (IFIS…LAGG), 147-167 (IAIS…LLSF), 171-191 (LLQY…YWLV), 203-223 (LGAI…VWYI), and 239-259 (LPIM…GGLI).

This sequence belongs to the UPF0761 family.

It is found in the cell inner membrane. This Actinobacillus pleuropneumoniae serotype 5b (strain L20) protein is UPF0761 membrane protein APL_1950.